The primary structure comprises 70 residues: Large ribosomal subunit protein bL32 (70 aa).

The span at 1-19 (MAVPKRKTTPSRRGMRRSH) shows a compositional bias: basic residues. Residues 1-21 (MAVPKRKTTPSRRGMRRSHQA) are disordered.

The protein belongs to the bacterial ribosomal protein bL32 family.

The protein is Large ribosomal subunit protein bL32 of Gluconobacter oxydans (strain 621H) (Gluconobacter suboxydans).